A 186-amino-acid chain; its full sequence is TATA box-binding protein-like 1 (186 aa).

It belongs to the TBP family. Expressed ubiquitously with highest expression in the ovary and testis.

It localises to the cytoplasm. Its subcellular location is the nucleus. In terms of biological role, part of a specialized transcription system that mediates the transcription of most ribosomal proteins through the 5'-TCT-3' motif which is a core promoter element at these genes. Seems to also mediate the transcription of NF1. Does not bind the TATA box. Members of the TBP family are differentially required to regulate transcription and development during early embryogenesis. Particularly regulates genes that have a role in catabolism. The chain is TATA box-binding protein-like 1 (tbpl1) from Xenopus laevis (African clawed frog).